The following is a 311-amino-acid chain: UDP-N-acetylenolpyruvoylglucosamine reductase (311 aa).

The 165-residue stretch at 34–198 (MGGAADLFIT…LEGTFRLQKG (165 aa)) folds into the FAD-binding PCMH-type domain. Residue R177 is part of the active site. Residue S227 is the Proton donor of the active site. The active site involves E297.

The protein belongs to the MurB family. FAD is required as a cofactor.

The protein localises to the cytoplasm. It catalyses the reaction UDP-N-acetyl-alpha-D-muramate + NADP(+) = UDP-N-acetyl-3-O-(1-carboxyvinyl)-alpha-D-glucosamine + NADPH + H(+). It functions in the pathway cell wall biogenesis; peptidoglycan biosynthesis. Cell wall formation. The protein is UDP-N-acetylenolpyruvoylglucosamine reductase of Shouchella clausii (strain KSM-K16) (Alkalihalobacillus clausii).